The sequence spans 325 residues: Beta-ketoacyl-[acyl-carrier-protein] synthase III (325 aa).

Catalysis depends on residues Cys112 and His250. Residues 251 to 255 (QANIR) are ACP-binding. Residue Asn280 is part of the active site.

The protein belongs to the thiolase-like superfamily. FabH family. Homodimer.

The protein localises to the cytoplasm. It carries out the reaction malonyl-[ACP] + acetyl-CoA + H(+) = 3-oxobutanoyl-[ACP] + CO2 + CoA. Its pathway is lipid metabolism; fatty acid biosynthesis. Its function is as follows. Catalyzes the condensation reaction of fatty acid synthesis by the addition to an acyl acceptor of two carbons from malonyl-ACP. Catalyzes the first condensation reaction which initiates fatty acid synthesis and may therefore play a role in governing the total rate of fatty acid production. Possesses both acetoacetyl-ACP synthase and acetyl transacylase activities. Its substrate specificity determines the biosynthesis of branched-chain and/or straight-chain of fatty acids. This chain is Beta-ketoacyl-[acyl-carrier-protein] synthase III, found in Clostridium acetobutylicum (strain ATCC 824 / DSM 792 / JCM 1419 / IAM 19013 / LMG 5710 / NBRC 13948 / NRRL B-527 / VKM B-1787 / 2291 / W).